A 2486-amino-acid chain; its full sequence is Nonribosomal peptide synthetase nanA (2486 aa).

The interval 231-637 is adenylation 1; it reads FSARQPLSPA…GRRGTQVKLR (407 aa). The Carrier 1 domain maps to 786 to 860; the sequence is TDIELKVHAL…DLARSAKETS (75 aa). S820 is modified (O-(pantetheine 4'-phosphoryl)serine). The segment at 902–1314 is condensation 1; it reads EDAYPCTPLQ…LKSVPRVSSQ (413 aa). An adenylation 2 region spans residues 1339-1735; the sequence is RAQARKTPLA…GRIGDQMKIR (397 aa). 2 consecutive Carrier domains span residues 1872–1948 and 2404–2480; these read PPST…SSAS and SSSE…QTQA. An O-(pantetheine 4'-phosphoryl)serine mark is found at S1909 and S2441. The segment at 2404-2480 is condensation 2; sequence SSSETIVEPL…KLARLLQTQA (77 aa).

The protein belongs to the NRP synthetase family.

Its pathway is secondary metabolite biosynthesis. Functionally, nonribosomal peptide synthetase; part of the gene cluster that mediates the biosynthesis of the benzazepine alkaloid nanangelenin A which contains an unprecedented 3,4-dihydro-1-benzazepine-2,5-dione-N-prenyl-N-acetoxy-anthranilamide scaffold. The first step of nanangelenin biosynthesis is catalyzed by the indoleamine 2,3-dioxygenase nanC which produces N-formyl-kynurenine through the catabolism of tryptophan. The two-module NRPS nanA then utilizes anthranilate (Ant) and L-kynurenine (L-Kyn) to assemble the dipeptide product nanangelenin B. The first adenylation domain of nanA (A1) loads anthranilate onto the T1 domain, while A2 loads kynurenine, generated through spontaneous nonenzymatic deformylation of the nanC-supplied N-formyl-kynurenine. The peptide bond formation between the tethered amino acids is catalyzed by the first condensation domain (C1) between anthranilate's carbonyl carbon and kynurenine's aliphatic primary amine. The second C domain (C2) catalyzes the final cyclization event between the aromatic amine of kynurenine and the tethered carbonyl carbon, yielding nanangelenin B. The terminal T3 domain enhances the catalytic efficiency of C2, suggesting the T2-tethered Ant-L-Kyn is transferred to T3 prior to cyclization by C2. Once released from nanA, nanangelenin B is then prenylated by the prenyltransferase nanD to form nanangelenin C. Nanangelenin C is then N-hydroxylated by the FAD-dependent monooxygenase nanF and further acetylated by the acetyltransferase nanB to yield nanangelenin F. Finally, the N-methyltransferase nanE methylates the amide nitrogen of 1-benzazepine to convert nanangelenin F into nanangelenin A. NanE is also able to methylate most of the intermediates of the pathway such as nanangelenin B and nanangelenin C to produce nanangelenin D and nanangelenin E, respectively. In Aspergillus nanangensis, this protein is Nonribosomal peptide synthetase nanA.